The chain runs to 114 residues: Small ribosomal subunit protein bS16 (114 aa).

Residues 87–114 (AFREQPVQSAPKKKAQERAAERAKAAEA) are disordered. Residues 100–114 (KAQERAAERAKAAEA) are compositionally biased toward basic and acidic residues.

This sequence belongs to the bacterial ribosomal protein bS16 family.

The polypeptide is Small ribosomal subunit protein bS16 (Acidiphilium cryptum (strain JF-5)).